Here is a 408-residue protein sequence, read N- to C-terminus: Argininosuccinate synthase (408 aa).

ATP contacts are provided by residues 8–16 (AYSGGLDTT) and Ala-35. Positions 86 and 91 each coordinate L-citrulline. Position 116 (Gly-116) interacts with ATP. Residues Thr-118, Asn-122, and Asp-123 each coordinate L-aspartate. An L-citrulline-binding site is contributed by Asn-122. Residues Arg-126, Ser-177, Ser-186, Glu-263, and Tyr-275 each contribute to the L-citrulline site.

This sequence belongs to the argininosuccinate synthase family. Type 1 subfamily. As to quaternary structure, homotetramer.

Its subcellular location is the cytoplasm. The catalysed reaction is L-citrulline + L-aspartate + ATP = 2-(N(omega)-L-arginino)succinate + AMP + diphosphate + H(+). The protein operates within amino-acid biosynthesis; L-arginine biosynthesis; L-arginine from L-ornithine and carbamoyl phosphate: step 2/3. In Lachnospira eligens (strain ATCC 27750 / DSM 3376 / VPI C15-48 / C15-B4) (Eubacterium eligens), this protein is Argininosuccinate synthase.